The following is a 489-amino-acid chain: Type II restriction enzyme Sau3AI (489 aa).

Requires Mg(2+) as cofactor.

It catalyses the reaction Endonucleolytic cleavage of DNA to give specific double-stranded fragments with terminal 5'-phosphates.. An E and P subtype restriction enzyme that recognizes the double-stranded sequence 5'-GATC-3' and cleaves before G-1. In Staphylococcus aureus, this protein is Type II restriction enzyme Sau3AI (sau3AIR).